Consider the following 119-residue polypeptide: Large ribosomal subunit protein bL20 (119 aa).

It belongs to the bacterial ribosomal protein bL20 family.

Functionally, binds directly to 23S ribosomal RNA and is necessary for the in vitro assembly process of the 50S ribosomal subunit. It is not involved in the protein synthesizing functions of that subunit. The chain is Large ribosomal subunit protein bL20 from Clostridium novyi (strain NT).